Consider the following 700-residue polypeptide: Myb-related protein B (700 aa).

3 consecutive HTH myb-type domains span residues 26–77 (RDSK…LRVL), 78–133 (NPDL…NPEV), and 134–184 (KKSC…KRKV). Residues 54 to 77 (WKFLASHFPNRTDQQCQYRWLRVL) constitute a DNA-binding region (H-T-H motif). Lys-104 participates in a covalent cross-link: Glycyl lysine isopeptide (Lys-Gly) (interchain with G-Cter in SUMO2). DNA-binding regions (H-T-H motif) lie at residues 106–129 (WTLIAKHLKGRLGKQCRERWHNHL) and 157–180 (WAEIAKMLPGRTDNAVKNHWNSTI). Residues Lys-194 and Lys-197 each participate in a glycyl lysine isopeptide (Lys-Gly) (interchain with G-Cter in SUMO2) cross-link. Disordered regions lie at residues 212 to 287 (LQSA…PETS) and 391 to 412 (PISPSTEVGGSGIGTPPSVLKR). The segment covering 213–229 (QSAQPTEGQGSLLTNWP) has biased composition (polar residues). The residue at position 241 (Ser-241) is a Phosphoserine. Thr-266 is modified (phosphothreonine). Lys-275 participates in a covalent cross-link: Glycyl lysine isopeptide (Lys-Gly) (interchain with G-Cter in SUMO2). Residues Ser-282 and Ser-393 each carry the phosphoserine modification. Lys-411 participates in a covalent cross-link: Glycyl lysine isopeptide (Lys-Gly) (interchain with G-Cter in SUMO2). The Nuclear localization signal signature appears at 411-417 (KRQRKRR). 2 positions are modified to phosphothreonine; by CDK2: Thr-440 and Thr-444. Residues Lys-447 and Lys-482 each participate in a glycyl lysine isopeptide (Lys-Gly) (interchain with G-Cter in SUMO2) cross-link. Thr-487 and Thr-494 each carry phosphothreonine; by CDK2. A Glycyl lysine isopeptide (Lys-Gly) (interchain with G-Cter in SUMO2) cross-link involves residue Lys-499. Phosphothreonine is present on Thr-505. A Glycyl lysine isopeptide (Lys-Gly) (interchain with G-Cter in SUMO2) cross-link involves residue Lys-509. Position 520 is a phosphothreonine; by CDK2 (Thr-520). Glycyl lysine isopeptide (Lys-Gly) (interchain with G-Cter in SUMO2) cross-links involve residues Lys-523, Lys-533, and Lys-546. Positions 564–584 (RPEKQKRKPGLRRSPIKKVRK) match the Bipartite nuclear localization signal motif. Ser-577 bears the Phosphoserine; by CDK2 mark. Glycyl lysine isopeptide (Lys-Gly) (interchain with G-Cter in SUMO2) cross-links involve residues Lys-584, Lys-596, Lys-625, Lys-639, and Lys-648.

As to quaternary structure, component of the DREAM complex (also named LINC complex) at least composed of E2F4, E2F5, LIN9, LIN37, LIN52, LIN54, MYBL1, MYBL2, RBL1, RBL2, RBBP4, TFDP1 and TFDP2. The complex exists in quiescent cells where it represses cell cycle-dependent genes. It dissociates in S phase when LIN9, LIN37, LIN52 and LIN54 form a subcomplex that binds to MYBL22. Interacts with CCNF (via the Cyclin N-terminal domain). In terms of processing, phosphorylated by cyclin A/CDK2 during S-phase. Phosphorylation at Thr-520 is probably involved in transcriptional activity.

Its subcellular location is the nucleus. Functionally, transcription factor involved in the regulation of cell survival, proliferation, and differentiation. Transactivates the expression of the CLU gene. The sequence is that of Myb-related protein B (MYBL2) from Homo sapiens (Human).